We begin with the raw amino-acid sequence, 612 residues long: Cytoplasmic dynein 1 intermediate chain 2 (612 aa).

Basic and acidic residues-rich tracts occupy residues 1–13 and 20–43; these read MSDK…ELER and QIRE…KKEA. Disordered regions lie at residues 1 to 117 and 129 to 188; these read MSDK…MAKI and TYTK…EEKQ. S2 is subject to N-acetylserine. The residue at position 51 (S51) is a Diphosphoserine. S51 and S84 each carry phosphoserine. Low complexity predominate over residues 82 to 91; it reads PSSKSVSTPS. A Phosphothreonine modification is found at T89. Phosphoserine is present on residues S91, S95, and S98. The span at 164-188 shows a compositional bias: basic and acidic residues; that stretch reads EKTLKKDEESDSKAPPHELTEEEKQ. 7 WD repeats span residues 251–300, 304–344, 353–394, 403–443, 448–493, 496–536, and 542–581; these read SKHR…TTPE, HCQS…RTPV, AHTH…HPQD, SKAV…AGIS, GHQG…PLYS, DNSD…EVPT, and EGNP…AVPR.

The protein belongs to the dynein intermediate chain family. Homodimer. The cytoplasmic dynein 1 complex consists of two catalytic heavy chains (HCs) and a number of non-catalytic subunits presented by intermediate chains (ICs), light intermediate chains (LICs) and light chains (LCs); the composition seems to vary in respect to the IC, LIC and LC composition. The heavy chain homodimer serves as a scaffold for the probable homodimeric assembly of the respective non-catalytic subunits. The ICs and LICs bind directly to the HC dimer and the LCs assemble on the IC dimer. Interacts with DYNLT3. Interacts with DYNLT1. Interacts (dephosphorylated at Ser-84) with DCTN1. Interacts with BICD2. Interacts with SPEF2. Interacts with CFAP61. In terms of processing, the phosphorylation status of Ser-84 appears to be involved in dynactin-dependent target binding. Pyrophosphorylation by 5-diphosphoinositol pentakisphosphate (5-IP7) promotes interaction with DCTN1. Serine pyrophosphorylation is achieved by Mg(2+)-dependent, but enzyme independent transfer of a beta-phosphate from a inositol pyrophosphate to a pre-phosphorylated serine residue.

The protein localises to the cytoplasm. Its subcellular location is the cytoskeleton. In terms of biological role, acts as one of several non-catalytic accessory components of the cytoplasmic dynein 1 complex that are thought to be involved in linking dynein to cargos and to adapter proteins that regulate dynein function. Cytoplasmic dynein 1 acts as a motor for the intracellular retrograde motility of vesicles and organelles along microtubules. The intermediate chains mediate the binding of dynein to dynactin via its 150 kDa component (p150-glued) DCTN1. Involved in membrane-transport, such as Golgi apparatus, late endosomes and lysosomes. The sequence is that of Cytoplasmic dynein 1 intermediate chain 2 (DYNC1I2) from Bos taurus (Bovine).